The primary structure comprises 475 residues: MSSAVVTRFAPSPTGYLHIGGARTALFNWLYARHTGGKMLLRIEDTDRERSTKGAIDAILDGLSWLGLDWDGDVVFQFARAERHRAVAEELLAAGRAYHCYATAEELAQMRETARAEGRAPRYDGRWRDRDPSEAPAGVKPVIRLRAPIEGETVVEDAVQGRVTWANKDLDDLVLLRSDGTPTYMLAVVVDDHDMGVTQIIRGDDHLTNAARQSQIFSALGWDVPRMAHIPLIHGADGAKLSKRHGALGVEAYRDLGYLPAALRNYLVRLGWSHGDQEVFSTEEMVAAFDLGAVGRSAARFDFAKLANLNGLYIRTSADADLVAAIETILPNVGPERGLSAPLQPDLKDKLIQAMPGLKERAKTLIELLDSAYYLYAQRPLALDDKARALLSDEGRGRLAGVRPVLEALPDWSAASTEGAVRQYAESAGCKLGQVAQPLRAALTGRTTSPPLFDVMAVLGREETLARLGDQAPQG.

Residues P11 to G21 carry the 'HIGH' region motif. The 'KMSKS' region motif lies at K240 to R244. K243 is a binding site for ATP.

It belongs to the class-I aminoacyl-tRNA synthetase family. Glutamate--tRNA ligase type 1 subfamily. Monomer.

The protein localises to the cytoplasm. The catalysed reaction is tRNA(Glu) + L-glutamate + ATP = L-glutamyl-tRNA(Glu) + AMP + diphosphate. Functionally, catalyzes the attachment of glutamate to tRNA(Glu) in a two-step reaction: glutamate is first activated by ATP to form Glu-AMP and then transferred to the acceptor end of tRNA(Glu). In Methylobacterium radiotolerans (strain ATCC 27329 / DSM 1819 / JCM 2831 / NBRC 15690 / NCIMB 10815 / 0-1), this protein is Glutamate--tRNA ligase 1.